Reading from the N-terminus, the 6298-residue chain is Adhesion G-protein coupled receptor V1 (6298 aa).

The N-terminal stretch at 1 to 28 is a signal peptide; sequence MSVTSEPGMISSFLLVYLSTLFISFVFG. Calx-beta domains follow at residues 29–116, 132–236, 251–362, 389–489, 646–746, 764–862, 877–980, 994–1094, 1108–1208, 1440–1540, 1562–1662, 1706–1805, 1846–1948, 1962–2075, 2103–2202, 2218–2320, 2437–2537, 2576–2672, 2687–2786, 2810–2921, 2945–3044, and 3067–3167; these read EAEI…FHLT, ASVT…IQLR, VEII…IMLL, YGVL…LTIL, PAIA…TLSL, DLII…VILS, VNIT…IILL, ASLR…IVLF, ATVI…LRLV, AMPR…FLLK, QKSD…VTLV, TGLP…VELL, ILVT…VSIL, TLTI…IELF, HLVI…VQLL, VITI…VQLA, TLCL…FLIS, FIIY…VRLG, VTVN…VVLY, LTVE…VNLT, QIVI…LLLT, and DGPG…VCTL. Over 29–5901 the chain is Extracellular; it reads EAEIRFTGQT…TDNSSSYNEA (5873 aa). EAR repeat units lie at residues 3251–3292, 3293–3341, 3344–3389, 3391–3435, 3437–3484, and 3488–3530; these read VFSI…RWQG, TFVP…MLTA, RLVL…RWNG, NFAW…TWSG, QFIN…VWEM, and SLRY…CWNS. 13 Calx-beta domains span residues 3581–3622, 3636–3736, 3772–3872, 3919–4003, 4017–4120, 4135–4235, 4251–4351, 4384–4484, 4507–4607, 4628–4728, 4989–5089, 5281–5325, and 5361–5461; these read QSDF…RVQL, SVRV…VVTL, GAVR…VTIA, GGVI…ISLV, VNVV…IELT, SVII…EFQL, ARIT…LAIT, RIII…ILLI, SPFG…IVQL, KFGD…AVQL, TTAE…INLT, AVEE…YVFL, and IGFS…FVEL. A GAIN-B domain is found at 5740 to 5896; that stretch reads SILALHWNPQ…AVYAQTDNSS (157 aa). Disulfide bonds link cysteine 5849–cysteine 5878 and cysteine 5866–cysteine 5880. Residues 5849-5896 are GPS; the sequence is CLLWNQAAASWLSDSQFCKVVEDASDYVECACSHMSVYAVYAQTDNSS. A helical transmembrane segment spans residues 5902-5922; the sequence is FFSAGLICISGLCLAVVSHMF. Topologically, residues 5923–5932 are cytoplasmic; that stretch reads CARHSMFAAK. A helical transmembrane segment spans residues 5933 to 5953; that stretch reads LLTHMMVASLGTQILFLASAY. Topologically, residues 5954–5973 are extracellular; it reads ASPHLSEESCSAVAAVAHYL. A helical membrane pass occupies residues 5974–5994; that stretch reads YLCQFSWMLIQSVNFWYVLVV. The Cytoplasmic segment spans residues 5995-6003; the sequence is SDEHTERRC. Residues 6004–6024 traverse the membrane as a helical segment; it reads LLFCLLSWGLPSFVVILLILI. The Extracellular segment spans residues 6025-6052; it reads LRGIYHRSMPQIYGLIHGDLCFIPNIYA. Residues 6053 to 6073 traverse the membrane as a helical segment; it reads ALFTAALVPLMCLVVVFVVFI. Over 6074 to 6097 the chain is Cytoplasmic; it reads HAYQLKPQWKGYDDVFRGRTNAAE. The helical transmembrane segment at 6098 to 6118 threads the bilayer; the sequence is IPLILYLFALISMTWLWGGLH. The Extracellular segment spans residues 6119-6126; that stretch reads MAYGHFWM. A helical membrane pass occupies residues 6127 to 6147; it reads LVLFVIFNSLQGLYVFVVYFI. At 6148–6298 the chain is on the cytoplasmic side; that stretch reads LHNQTCCPMK…RRIPIADTHL (151 aa). Disordered regions lie at residues 6206–6242 and 6264–6283; these read ERSSFQQTSQASPDLKTSPQNGASFPSSGGYGPGSLI and SVSDNESGQGSQEGGTLTDS. Polar residues-rich tracts occupy residues 6208 to 6226 and 6265 to 6283; these read SSFQQTSQASPDLKTSPQN and VSDNESGQGSQEGGTLTDS.

This sequence belongs to the G-protein coupled receptor 2 family. Adhesion G-protein coupled receptor (ADGR) subfamily. Forms a heterodimer, consisting of a large extracellular region (alpha subunit) non-covalently linked to a seven-transmembrane moiety (beta subunit). Interacts (via the cytoplasmic region) with PDZD7. Component of USH2 complex, composed of ADGRV1, PDZD7, USH2A and WHRN. Interacts with USH2A and WHRN. Interacts (via the cytoplasmic region) with MYO7A (via MyTH4-FERM domains). In terms of processing, autoproteolytically cleaved into 2 subunits, an extracellular alpha subunit and a seven-transmembrane subunit. As to expression, expressed by oligodendrocytes. In midbrain, enriched in the myelinated regions of the superior and inferior colliculi. In the cochlea, expressed in developing hair cells. Expressed by photoreceptors in the retina.

It is found in the cell membrane. Its subcellular location is the cell projection. The protein resides in the stereocilium membrane. It localises to the photoreceptor inner segment. The protein localises to the secreted. Functionally, G-protein coupled receptor which has an essential role in the development of hearing and vision. Couples to G-alpha(i)-proteins, GNAI1/2/3, G-alpha(q)-proteins, GNAQ, as well as G-alpha(s)-proteins, GNAS, inhibiting adenylate cyclase (AC) activity and cAMP production. Required for the hair bundle ankle formation, which connects growing stereocilia in developing cochlear hair cells of the inner ear. In response to extracellular calcium, activates kinases PKA and PKC to regulate myelination by inhibiting the ubiquitination of MAG, thus enhancing the stability of this protein in myelin-forming cells of the auditory pathway. In retina photoreceptors, the USH2 complex is required for the maintenance of periciliary membrane complex that seems to play a role in regulating intracellular protein transport. Involved in the regulation of bone metabolism. Cleaved ADGRV1 beta-subunit couples with G-alpha(i)-proteins, GNAI1/2/3, and constitutively inhibits adenylate cyclase (AC) activity with a stronger effect than full ADGRV1. The protein is Adhesion G-protein coupled receptor V1 of Mus musculus (Mouse).